A 276-amino-acid polypeptide reads, in one-letter code: AT-hook motif nuclear-localized protein 17 (276 aa).

Residues Met-1–Ser-10 are compositionally biased toward basic and acidic residues. 2 disordered regions span residues Met-1–Asp-80 and Ala-212–Glu-248. Composition is skewed to low complexity over residues His-20–His-31 and Ser-40–Asp-49. Residues Arg-56–Lys-68 constitute a DNA-binding region (a.T hook). In terms of domain architecture, PPC spans Asp-80–Pro-230. Basic and acidic residues predominate over residues Ala-212–Gly-227. Residues Ser-233 to Glu-248 show a composition bias toward gly residues.

The protein resides in the nucleus. Functionally, transcription factor that specifically binds AT-rich DNA sequences related to the nuclear matrix attachment regions (MARs). In Arabidopsis thaliana (Mouse-ear cress), this protein is AT-hook motif nuclear-localized protein 17.